The following is a 584-amino-acid chain: Kinesin-like protein KIN-10C (584 aa).

The 314-residue stretch at P11–V324 folds into the Kinesin motor domain. G99–T106 is a binding site for ATP. Disordered stretches follow at residues S377–Q398 and D445–T469.

It belongs to the TRAFAC class myosin-kinesin ATPase superfamily. Kinesin family. KIN-10 subfamily.

This Oryza sativa subsp. japonica (Rice) protein is Kinesin-like protein KIN-10C.